A 621-amino-acid polypeptide reads, in one-letter code: 1-deoxy-D-xylulose-5-phosphate synthase (621 aa).

Residues His-80 and 121 to 123 (GHS) each bind thiamine diphosphate. Mg(2+) is bound at residue Asp-152. Thiamine diphosphate-binding positions include 153–154 (GA), Asn-181, Tyr-288, and Glu-370. Asn-181 provides a ligand contact to Mg(2+).

Belongs to the transketolase family. DXPS subfamily. Homodimer. Mg(2+) serves as cofactor. Thiamine diphosphate is required as a cofactor.

It catalyses the reaction D-glyceraldehyde 3-phosphate + pyruvate + H(+) = 1-deoxy-D-xylulose 5-phosphate + CO2. Its pathway is metabolic intermediate biosynthesis; 1-deoxy-D-xylulose 5-phosphate biosynthesis; 1-deoxy-D-xylulose 5-phosphate from D-glyceraldehyde 3-phosphate and pyruvate: step 1/1. Functionally, catalyzes the acyloin condensation reaction between C atoms 2 and 3 of pyruvate and glyceraldehyde 3-phosphate to yield 1-deoxy-D-xylulose-5-phosphate (DXP). This Shewanella woodyi (strain ATCC 51908 / MS32) protein is 1-deoxy-D-xylulose-5-phosphate synthase.